We begin with the raw amino-acid sequence, 305 residues long: Homoserine O-acetyltransferase (305 aa).

Cys142 (acyl-thioester intermediate) is an active-site residue. Substrate contacts are provided by Lys163 and Ser192. The active-site Proton acceptor is His235. Residue Glu237 is part of the active site. Arg249 provides a ligand contact to substrate.

The protein belongs to the MetA family.

The protein resides in the cytoplasm. The catalysed reaction is L-homoserine + acetyl-CoA = O-acetyl-L-homoserine + CoA. It functions in the pathway amino-acid biosynthesis; L-methionine biosynthesis via de novo pathway; O-acetyl-L-homoserine from L-homoserine: step 1/1. Transfers an acetyl group from acetyl-CoA to L-homoserine, forming acetyl-L-homoserine. The protein is Homoserine O-acetyltransferase of Bacteroides fragilis (strain YCH46).